Here is a 347-residue protein sequence, read N- to C-terminus: Protein RecA (347 aa).

65-72 contacts ATP; the sequence is GPESSGKT. The span at 327–336 shows a compositional bias: basic and acidic residues; it reads KFEPTELSRE. Residues 327-347 form a disordered region; sequence KFEPTELSREEGDEDTLEDAM. The span at 337 to 347 shows a compositional bias: acidic residues; that stretch reads EGDEDTLEDAM.

This sequence belongs to the RecA family.

It localises to the cytoplasm. Its function is as follows. Can catalyze the hydrolysis of ATP in the presence of single-stranded DNA, the ATP-dependent uptake of single-stranded DNA by duplex DNA, and the ATP-dependent hybridization of homologous single-stranded DNAs. It interacts with LexA causing its activation and leading to its autocatalytic cleavage. This is Protein RecA from Xylella fastidiosa (strain M12).